An 880-amino-acid chain; its full sequence is Alanine--tRNA ligase (880 aa).

Zn(2+) contacts are provided by histidine 558, histidine 562, cysteine 663, and histidine 667.

This sequence belongs to the class-II aminoacyl-tRNA synthetase family. The cofactor is Zn(2+).

It is found in the cytoplasm. It catalyses the reaction tRNA(Ala) + L-alanine + ATP = L-alanyl-tRNA(Ala) + AMP + diphosphate. Catalyzes the attachment of alanine to tRNA(Ala) in a two-step reaction: alanine is first activated by ATP to form Ala-AMP and then transferred to the acceptor end of tRNA(Ala). Also edits incorrectly charged Ser-tRNA(Ala) and Gly-tRNA(Ala) via its editing domain. The polypeptide is Alanine--tRNA ligase (Mycoplasmopsis agalactiae (strain NCTC 10123 / CIP 59.7 / PG2) (Mycoplasma agalactiae)).